Reading from the N-terminus, the 420-residue chain is Light-independent protochlorophyllide reductase subunit N (420 aa).

Residues Cys21, Cys46, and Cys103 each coordinate [4Fe-4S] cluster.

It belongs to the BchN/ChlN family. In terms of assembly, protochlorophyllide reductase is composed of three subunits; BchL, BchN and BchB. Forms a heterotetramer of two BchB and two BchN subunits. [4Fe-4S] cluster is required as a cofactor.

It carries out the reaction chlorophyllide a + oxidized 2[4Fe-4S]-[ferredoxin] + 2 ADP + 2 phosphate = protochlorophyllide a + reduced 2[4Fe-4S]-[ferredoxin] + 2 ATP + 2 H2O. The protein operates within porphyrin-containing compound metabolism; bacteriochlorophyll biosynthesis (light-independent). Its function is as follows. Component of the dark-operative protochlorophyllide reductase (DPOR) that uses Mg-ATP and reduced ferredoxin to reduce ring D of protochlorophyllide (Pchlide) to form chlorophyllide a (Chlide). This reaction is light-independent. The NB-protein (BchN-BchB) is the catalytic component of the complex. This chain is Light-independent protochlorophyllide reductase subunit N, found in Chlorobium phaeobacteroides (strain DSM 266 / SMG 266 / 2430).